Reading from the N-terminus, the 213-residue chain is Pyridoxine/pyridoxamine 5'-phosphate oxidase (213 aa).

Substrate contacts are provided by residues 8–11 and K67; that span reads RREY. FMN is bound by residues 62-67, 77-78, R83, K84, and Q106; these read RIVLLK and FT. Residues Y124, R128, and S132 each coordinate substrate. FMN contacts are provided by residues 141-142 and W186; that span reads QS. 192 to 194 is a substrate binding site; it reads RLH. Residue R196 participates in FMN binding.

The protein belongs to the pyridoxamine 5'-phosphate oxidase family. As to quaternary structure, homodimer. It depends on FMN as a cofactor.

It catalyses the reaction pyridoxamine 5'-phosphate + O2 + H2O = pyridoxal 5'-phosphate + H2O2 + NH4(+). The enzyme catalyses pyridoxine 5'-phosphate + O2 = pyridoxal 5'-phosphate + H2O2. The protein operates within cofactor metabolism; pyridoxal 5'-phosphate salvage; pyridoxal 5'-phosphate from pyridoxamine 5'-phosphate: step 1/1. It functions in the pathway cofactor metabolism; pyridoxal 5'-phosphate salvage; pyridoxal 5'-phosphate from pyridoxine 5'-phosphate: step 1/1. Functionally, catalyzes the oxidation of either pyridoxine 5'-phosphate (PNP) or pyridoxamine 5'-phosphate (PMP) into pyridoxal 5'-phosphate (PLP). This is Pyridoxine/pyridoxamine 5'-phosphate oxidase from Shewanella sediminis (strain HAW-EB3).